A 399-amino-acid chain; its full sequence is Leu/Ile/Val-binding protein homolog 7 (399 aa).

A signal peptide spans 1 to 22; the sequence is MEKHLIALSVAALLAGAAPASA.

The protein belongs to the leucine-binding protein family.

Its function is as follows. Component of an amino-acid transport system. This is Leu/Ile/Val-binding protein homolog 7 from Brucella melitensis biotype 1 (strain ATCC 23456 / CCUG 17765 / NCTC 10094 / 16M).